The primary structure comprises 784 residues: Ubiquitin carboxyl-terminal hydrolase 1 (784 aa).

Disordered regions lie at residues 1–21 and 33–54; these read MPGV…SKKN and TKRA…EYRG. Residues 7 to 16 show a composition bias toward polar residues; the sequence is SESNGLSRGS. A phosphoserine mark is found at Ser-16, Ser-42, and Ser-67. The 704-residue stretch at 81–784 folds into the USP domain; the sequence is VGLNNLGNTC…TPYLLFYKKL (704 aa). Cys-90 serves as the catalytic Nucleophile. Composition is skewed to basic and acidic residues over residues 232–243 and 252–264; these read KVEEKSLQKEET and DSTR…KEQL. Disordered stretches follow at residues 232–341 and 363–411; these read KVEE…KINW and TNQR…SSEA. Positions 389-407 are enriched in polar residues; it reads NTVNGSGPASPGSSVTPVD. At Ser-475 the chain carries Phosphoserine. His-593 acts as the Proton acceptor in catalysis. Positions 686–723 are disordered; that stretch reads PEKVVGTPFTDSRNSETNDTNGTQESDRSKESSDQTGI. The span at 694 to 709 shows a compositional bias: polar residues; the sequence is FTDSRNSETNDTNGTQ. Ser-767 bears the Phosphoserine mark.

The protein belongs to the peptidase C19 family. In terms of assembly, interacts with FANCD2 and PCNA. Interacts with WDR48. Interacts with ATAD5; the interaction regulates USP1-mediated PCNA deubiquitination. Post-translationally, autocatalytic cleavage of USP1 following UV irradiation inactivates it, leading to an increase in ubiquitinated PCNA, recruitment of POLH and translesion synthesis. Ubiquitinated by the CRL2(KLHDC2) complex following autocatalytic cleavage, leading to its degradation: the CRL2(KLHDC2) complex recognizes the diglycine (Gly-Gly) at the C-terminus.

Its subcellular location is the nucleus. It carries out the reaction Thiol-dependent hydrolysis of ester, thioester, amide, peptide and isopeptide bonds formed by the C-terminal Gly of ubiquitin (a 76-residue protein attached to proteins as an intracellular targeting signal).. In terms of biological role, negative regulator of DNA damage repair which specifically deubiquitinates monoubiquitinated FANCD2. Also involved in PCNA-mediated translesion synthesis (TLS) by deubiquitinating monoubiquitinated PCNA. Has almost no deubiquitinating activity by itself and requires the interaction with WDR48 to have a high activity. The polypeptide is Ubiquitin carboxyl-terminal hydrolase 1 (Rattus norvegicus (Rat)).